A 319-amino-acid polypeptide reads, in one-letter code: D-alanine--D-alanine ligase B (319 aa).

An ATP-grasp domain is found at 117–312; that stretch reads KQVWQSLGPA…FQQLVLAILA (196 aa). 143 to 198 contributes to the ATP binding site; it reads ATELGFPLIVKPAHEGSSIGMAKVNSVDELIAAWKAASTYDSQVLVEQWIQGPEFT. The Mg(2+) site is built by Asp266, Glu279, and Asn281.

This sequence belongs to the D-alanine--D-alanine ligase family. Mg(2+) is required as a cofactor. Mn(2+) serves as cofactor.

It localises to the cytoplasm. The catalysed reaction is 2 D-alanine + ATP = D-alanyl-D-alanine + ADP + phosphate + H(+). It participates in cell wall biogenesis; peptidoglycan biosynthesis. Its function is as follows. Cell wall formation. This chain is D-alanine--D-alanine ligase B, found in Pseudomonas syringae pv. tomato (strain ATCC BAA-871 / DC3000).